Reading from the N-terminus, the 542-residue chain is CTP synthase (542 aa).

Residues 1–265 (MARYVFITGG…DDEVLAAFGI (265 aa)) form an amidoligase domain region. Ser13 serves as a coordination point for CTP. Ser13 is a binding site for UTP. ATP-binding positions include 14-19 (SLGKGI) and Asp71. Mg(2+) is bound by residues Asp71 and Glu139. Residues 146 to 148 (DIE), 186 to 191 (KTKPTQ), and Lys222 contribute to the CTP site. UTP is bound by residues 186–191 (KTKPTQ) and Lys222. The Glutamine amidotransferase type-1 domain maps to 291–541 (TIAIVGKYTG…IEAATEQSRL (251 aa)). Gly353 provides a ligand contact to L-glutamine. Residue Cys380 is the Nucleophile; for glutamine hydrolysis of the active site. Residues 381 to 384 (FGMQ), Glu404, and Arg469 contribute to the L-glutamine site. Catalysis depends on residues His514 and Glu516.

It belongs to the CTP synthase family. As to quaternary structure, homotetramer.

It catalyses the reaction UTP + L-glutamine + ATP + H2O = CTP + L-glutamate + ADP + phosphate + 2 H(+). The catalysed reaction is L-glutamine + H2O = L-glutamate + NH4(+). It carries out the reaction UTP + NH4(+) + ATP = CTP + ADP + phosphate + 2 H(+). It participates in pyrimidine metabolism; CTP biosynthesis via de novo pathway; CTP from UDP: step 2/2. With respect to regulation, allosterically activated by GTP, when glutamine is the substrate; GTP has no effect on the reaction when ammonia is the substrate. The allosteric effector GTP functions by stabilizing the protein conformation that binds the tetrahedral intermediate(s) formed during glutamine hydrolysis. Inhibited by the product CTP, via allosteric rather than competitive inhibition. Its function is as follows. Catalyzes the ATP-dependent amination of UTP to CTP with either L-glutamine or ammonia as the source of nitrogen. Regulates intracellular CTP levels through interactions with the four ribonucleotide triphosphates. In Rhizobium johnstonii (strain DSM 114642 / LMG 32736 / 3841) (Rhizobium leguminosarum bv. viciae), this protein is CTP synthase.